The primary structure comprises 360 residues: Photosystem II protein D1 (360 aa).

3 consecutive transmembrane segments (helical) span residues 30-47 (YVGWFGVLMIPCLLTAAA), 119-134 (HFLIGISAYMGRQWEL), and 143-157 (WICVAYSAPVSAAFA). Histidine 119 provides a ligand contact to chlorophyll a. Position 127 (tyrosine 127) interacts with pheophytin a. Residues aspartate 171 and glutamate 190 each contribute to the [CaMn4O5] cluster site. The chain crosses the membrane as a helical span at residues 198–219 (FHMAGVAGMFGGSLFSAMHGSL). Residue histidine 199 participates in chlorophyll a binding. A quinone contacts are provided by residues histidine 216 and 265–266 (SF). Histidine 216 provides a ligand contact to Fe cation. Fe cation is bound at residue histidine 273. The helical transmembrane segment at 275 to 289 (FLAVFPVVCVWLTSM) threads the bilayer. [CaMn4O5] cluster is bound by residues histidine 333, glutamate 334, aspartate 343, and alanine 345. A propeptide spanning residues 346–360 (AAESTTVALSAPAIG) is cleaved from the precursor.

The protein belongs to the reaction center PufL/M/PsbA/D family. In terms of assembly, PSII is composed of 1 copy each of membrane proteins PsbA, PsbB, PsbC, PsbD, PsbE, PsbF, PsbH, PsbI, PsbJ, PsbK, PsbL, PsbM, PsbT, PsbX, PsbY, Psb30/Ycf12, peripheral proteins PsbO, CyanoQ (PsbQ), PsbU, PsbV and a large number of cofactors. It forms dimeric complexes. It depends on The D1/D2 heterodimer binds P680, chlorophylls that are the primary electron donor of PSII, and subsequent electron acceptors. It shares a non-heme iron and each subunit binds pheophytin, quinone, additional chlorophylls, carotenoids and lipids. D1 provides most of the ligands for the Mn4-Ca-O5 cluster of the oxygen-evolving complex (OEC). There is also a Cl(-1) ion associated with D1 and D2, which is required for oxygen evolution. The PSII complex binds additional chlorophylls, carotenoids and specific lipids. as a cofactor. Tyr-162 forms a radical intermediate that is referred to as redox-active TyrZ, YZ or Y-Z. Post-translationally, C-terminally processed by CtpA; processing is essential to allow assembly of the oxygen-evolving complex and thus photosynthetic growth.

The protein localises to the cellular thylakoid membrane. It catalyses the reaction 2 a plastoquinone + 4 hnu + 2 H2O = 2 a plastoquinol + O2. In terms of biological role, photosystem II (PSII) is a light-driven water:plastoquinone oxidoreductase that uses light energy to abstract electrons from H(2)O, generating O(2) and a proton gradient subsequently used for ATP formation. It consists of a core antenna complex that captures photons, and an electron transfer chain that converts photonic excitation into a charge separation. The D1/D2 (PsbA/PsbD) reaction center heterodimer binds P680, the primary electron donor of PSII as well as several subsequent electron acceptors. The polypeptide is Photosystem II protein D1 (Prochlorococcus marinus (strain MIT 9301)).